The primary structure comprises 630 residues: MNNNPNRRGSLIGPLFIYFILAMLIFMSISQLNTSNITEISYTDLVNLINQDTIISLQIDTSGLIQAKAKNGQLFQVYAPTLLMDQAYVRALANDGIKVEYIQNTGASWWVTMLIYMLPLIILMFFWFWMFRRSGTGEGIPGANYRRNPARRYDSKRNKITFNDVAGIDEVKEELEDIVNFLKDPKNFSALGAKMPKGVLLSGPPGTGKTLVARAVAGEADVPFYFMSGSDFVELFVGVGAARVRDLFKEAKENSPAIIFIDELDAVGRQRGTGLGGGHDEREQTLNALLVEMDGFDPREGIVVMAATNRPDILDKALLRPGRFDKKIFLDVPDLRAREEIIKIHLRGKRIADDIDVKSLAQSTPGFVGADLENMVNEAALLAARDNRDHITNDDFQEAIERVIVGPARKSRKITPKEKKVITYHELGHAVLGYLLPYADPVHKITIVPRGQAALGYTMQLPSEDRFLITEPEIKDKIVGMLGGRAAEEIVFNEITTGAGNDLKRATELVREMVAQLGMSEKIGPIAWGEEEGEIFLGREITRMKNFSQETAKEIDSEIKNFILSSYEKAKNLLSENRKRLDLLAIYLYNKENISGKEFKKMMEMDIEELNDYVLKDKDVKETNLFVSYA.

Residues 1-8 (MNNNPNRR) lie on the Cytoplasmic side of the membrane. Residues 9–29 (GSLIGPLFIYFILAMLIFMSI) form a helical membrane-spanning segment. At 30–110 (SQLNTSNITE…YIQNTGASWW (81 aa)) the chain is on the periplasmic side. A helical membrane pass occupies residues 111–131 (VTMLIYMLPLIILMFFWFWMF). Topologically, residues 132 to 630 (RRSGTGEGIP…KETNLFVSYA (499 aa)) are cytoplasmic. 203-210 (GPPGTGKT) is an ATP binding site. Residue histidine 425 coordinates Zn(2+). Glutamate 426 is an active-site residue. Residues histidine 429 and aspartate 502 each coordinate Zn(2+).

In the central section; belongs to the AAA ATPase family. This sequence in the C-terminal section; belongs to the peptidase M41 family. Homohexamer. Requires Zn(2+) as cofactor.

It is found in the cell inner membrane. In terms of biological role, acts as a processive, ATP-dependent zinc metallopeptidase for both cytoplasmic and membrane proteins. Plays a role in the quality control of integral membrane proteins. The sequence is that of ATP-dependent zinc metalloprotease FtsH 2 from Petrotoga mobilis (strain DSM 10674 / SJ95).